Here is a 413-residue protein sequence, read N- to C-terminus: Alpha-1-antitrypsin 1-1 (413 aa).

The first 24 residues, 1 to 24 (MTPSISWGLLLLAGLCCLVPSFLA), serve as a signal peptide directing secretion. 3 N-linked (GlcNAc...) asparagine glycosylation sites follow: asparagine 64, asparagine 101, and asparagine 265. Residues 368–387 (AVTVLQMVPMSMPPILRFDH) form an RCL region.

This sequence belongs to the serpin family.

The protein resides in the secreted. Functionally, inhibitor of serine proteases. Its primary target is elastase, but it also has a moderate affinity for plasmin and thrombin. This Mus musculus (Mouse) protein is Alpha-1-antitrypsin 1-1 (Serpina1a).